The sequence spans 277 residues: 2,5-diketo-D-gluconic acid reductase B (277 aa).

Y51 serves as the catalytic Proton donor. H109 is a binding site for substrate. Residue S189–N242 participates in NADP(+) binding.

It belongs to the aldo/keto reductase family.

The protein resides in the cytoplasm. The enzyme catalyses 2-dehydro-D-gluconate + NADP(+) = 2,5-didehydro-D-gluconate + NADPH + H(+). Catalyzes the reduction of 2,5-diketo-D-gluconic acid (25DKG) to 2-keto-L-gulonic acid (2KLG). 25DKGR-B has higher catalytic efficiency than 25DKGR-A. This Corynebacterium sp. (strain SHS752001) protein is 2,5-diketo-D-gluconic acid reductase B (dkgB).